We begin with the raw amino-acid sequence, 496 residues long: Probable cytosol aminopeptidase (496 aa).

Positions 258 and 263 each coordinate Mn(2+). Lys-270 is a catalytic residue. Residues Asp-281, Asp-340, and Glu-342 each contribute to the Mn(2+) site. Arg-344 is an active-site residue.

This sequence belongs to the peptidase M17 family. It depends on Mn(2+) as a cofactor.

It localises to the cytoplasm. It carries out the reaction Release of an N-terminal amino acid, Xaa-|-Yaa-, in which Xaa is preferably Leu, but may be other amino acids including Pro although not Arg or Lys, and Yaa may be Pro. Amino acid amides and methyl esters are also readily hydrolyzed, but rates on arylamides are exceedingly low.. The enzyme catalyses Release of an N-terminal amino acid, preferentially leucine, but not glutamic or aspartic acids.. Presumably involved in the processing and regular turnover of intracellular proteins. Catalyzes the removal of unsubstituted N-terminal amino acids from various peptides. This is Probable cytosol aminopeptidase from Helicobacter pylori (strain G27).